Reading from the N-terminus, the 127-residue chain is Ribonuclease P protein component (127 aa).

This sequence belongs to the RnpA family. In terms of assembly, consists of a catalytic RNA component (M1 or rnpB) and a protein subunit.

It catalyses the reaction Endonucleolytic cleavage of RNA, removing 5'-extranucleotides from tRNA precursor.. Functionally, RNaseP catalyzes the removal of the 5'-leader sequence from pre-tRNA to produce the mature 5'-terminus. It can also cleave other RNA substrates such as 4.5S RNA. The protein component plays an auxiliary but essential role in vivo by binding to the 5'-leader sequence and broadening the substrate specificity of the ribozyme. The chain is Ribonuclease P protein component from Corynebacterium urealyticum (strain ATCC 43042 / DSM 7109).